A 160-amino-acid polypeptide reads, in one-letter code: Myosin regulatory light chain, smooth muscle (160 aa).

Position 1 is a blocked amino end (Ser) (Ser-1). Residue Ser-11 is modified to Phosphoserine. EF-hand domains follow at residues 20-55 and 88-123; these read NQIQEMKEAFTMIDQNRDGLIDVSDLKEMYSNLGTA and DPEETLRNAFQMFDSDNTGYIPEEYMKDLLENMGDN. Residues Asp-33, Asn-35, Asp-37, and Asp-44 each coordinate Ca(2+).

Functionally, in molluscan muscle, calcium regulation is associated with myosin rather than with actin. Muscle myosin contains two types of light chains: the catalytic light chain, essential for ATPase activity, and the regulatory light chain, a calcium-binding protein responsible for Ca(2+) dependent binding and Ca(2+) dependent Mg-ATPase activity. The polypeptide is Myosin regulatory light chain, smooth muscle (Spisula sachalinensis (Sakhalin surf-clam)).